Here is a 764-residue protein sequence, read N- to C-terminus: MEAMMNFTSQYTVEEALAIEKEFSRLKEKCYLDHAGTTLYADSQIRSVCEGLAQNLYCNPHTSRTTEDLLDQVRYRVLRHFNTRSSEYSLIFTSGTTASLKLLAESYEFAPEGAFVYLKDSHTSVLGMREIVGTERIYPVEREQLLKELDSSERSDSEHSSLIVFPAQCNFNGVKYPLELVRKIQRNGISGYGKERFRVCLDAASFVSTSFLDLSKYQPDFVCLSFYKIFGYPTGLGALLVHHTAADQLRKKYYGGGTVKIAMAGRNFHVKRDPLVERFEDGTLAFTSIIALLQGFETLERLVPSTAGLRTIERISQQTFHLGRYCYNRLKALRHSNGNAVVKLYHDTGFEDQGLQGGIVNFNILHEDGTYVGFAEVSYMASLHNILLRTGCFCNPGACQRHLQLSDEDVLKQFDAGHVCGDANDLIDGQPTGSVRVSFGYMTRKEDIDCLLEMVEKCYIRKTIANGFTRTQIVSKYKSYDQPRLKMICLFPIKSCGAFKVTTRWPLSRRGLKHDREFVIVDENGVALTQKKLTEMCLIRPQINLKTNEMTLSHPSMDDFVLDLDLLGESQRIKLCQTKVCQDNVQAIDCGDQVAEWISVALQTSGLRLLKQSDEEVRTFQQSKQEIALANQAQFLLINQASVRWLADKVPDWDELHEEPTLESLVDRFRGNLIVETPTSMEECDWKRVTIGYLEFAVDGPCSRCQMICIDQGTGVKTTEPLRTIGREFKGKMRFGIYLSHVNPLRDGSEQWLYCNSVVEGLSE.

Position 228 is an N6-(pyridoxal phosphate)lysine (lysine 228). Cysteine 394 is a catalytic residue. One can recognise an MOSC domain in the interval 607–762 (LRLLKQSDEE…LYCNSVVEGL (156 aa)).

It belongs to the class-V pyridoxal-phosphate-dependent aminotransferase family. MOCOS subfamily. Requires pyridoxal 5'-phosphate as cofactor.

It catalyses the reaction Mo-molybdopterin + L-cysteine + AH2 = thio-Mo-molybdopterin + L-alanine + A + H2O. In terms of biological role, sulfurates the molybdenum cofactor. Sulfation of molybdenum is essential for xanthine dehydrogenase (XDH) and aldehyde oxidase (ADO) enzymes in which molybdenum cofactor is liganded by 1 oxygen and 1 sulfur atom in active form. This chain is Molybdenum cofactor sulfurase 3, found in Aedes aegypti (Yellowfever mosquito).